The chain runs to 272 residues: MPELPEVETSRLGITPHLQGQTIKAIVVRTDKLRWPIPQELQKLVGQRVQSIRRRAKYLMIDTPKGSAIIHLGMSGSLRVLDEEVPSAKHDHVDLVLENGKVLRYNDPRKFGAWLYSEVGVAHQVLSKLGPEPLTNEFNSEYFAEKAKNKKTVVKQFIMNNAVVVGVGNIYASESLFMAQIHPKTSVGSLKASQITLLVAEIKKVLETAIKQGGTTLKDFNQVDGKPGYFAQELHVYGRAKKKCLLCSSIIQEEKIGQRNTFWCGHCQPFNK.

Catalysis depends on Pro-2, which acts as the Schiff-base intermediate with DNA. Glu-3 serves as the catalytic Proton donor. Lys-57 acts as the Proton donor; for beta-elimination activity in catalysis. The DNA site is built by His-90, Arg-109, and Lys-150. Residues 235–269 (HVYGRAKKKCLLCSSIIQEEKIGQRNTFWCGHCQP) form an FPG-type zinc finger. Arg-259 functions as the Proton donor; for delta-elimination activity in the catalytic mechanism.

It belongs to the FPG family. In terms of assembly, monomer. Zn(2+) is required as a cofactor.

The catalysed reaction is Hydrolysis of DNA containing ring-opened 7-methylguanine residues, releasing 2,6-diamino-4-hydroxy-5-(N-methyl)formamidopyrimidine.. It carries out the reaction 2'-deoxyribonucleotide-(2'-deoxyribose 5'-phosphate)-2'-deoxyribonucleotide-DNA = a 3'-end 2'-deoxyribonucleotide-(2,3-dehydro-2,3-deoxyribose 5'-phosphate)-DNA + a 5'-end 5'-phospho-2'-deoxyribonucleoside-DNA + H(+). Involved in base excision repair of DNA damaged by oxidation or by mutagenic agents. Acts as a DNA glycosylase that recognizes and removes damaged bases. Has a preference for oxidized purines, such as 7,8-dihydro-8-oxoguanine (8-oxoG). Has AP (apurinic/apyrimidinic) lyase activity and introduces nicks in the DNA strand. Cleaves the DNA backbone by beta-delta elimination to generate a single-strand break at the site of the removed base with both 3'- and 5'-phosphates. The polypeptide is Formamidopyrimidine-DNA glycosylase (Aliivibrio fischeri (strain ATCC 700601 / ES114) (Vibrio fischeri)).